A 240-amino-acid polypeptide reads, in one-letter code: MTRSSSDRAIVVPAAQNALFTDSPFPTPDSRLIAGVDEAGRGPLAGPVAVAAVVFDPAKPRINGLDDSKQLSAERREQLYARIVDRALAWSVVLIDSEEIDRINIYQATMLGMRRAVEGVAHVAGFARIDGNRVPKGLPFPAEALIGGDALDRAIMAASIVAKVTRDRLMRELHAQHPEYRFDLHKGYSTPAHLAALQTHGPCPQHRRSFAPVRRALGLETAQTAWDVPCAPADGLLLAE.

The 192-residue stretch at 31–222 (RLIAGVDEAG…VRRALGLETA (192 aa)) folds into the RNase H type-2 domain. A divalent metal cation is bound by residues aspartate 37, glutamate 38, and aspartate 130.

The protein belongs to the RNase HII family. The cofactor is Mn(2+). Mg(2+) serves as cofactor.

It is found in the cytoplasm. The catalysed reaction is Endonucleolytic cleavage to 5'-phosphomonoester.. Its function is as follows. Endonuclease that specifically degrades the RNA of RNA-DNA hybrids. The chain is Ribonuclease HII from Xanthomonas campestris pv. campestris (strain B100).